Reading from the N-terminus, the 204-residue chain is Large ribosomal subunit protein eL15 (204 aa).

It belongs to the eukaryotic ribosomal protein eL15 family. As to quaternary structure, component of the large ribosomal subunit.

Its subcellular location is the cytoplasm. In terms of biological role, component of the large ribosomal subunit. The ribosome is a large ribonucleoprotein complex responsible for the synthesis of proteins in the cell. This chain is Large ribosomal subunit protein eL15 (rpl15), found in Megalobrama amblycephala (Chinese blunt snout bream).